A 226-amino-acid chain; its full sequence is MAPKSDNTEAIVLNFVNEQNKPLNTQNAADALQKFNLKKTAVQKALDSLADAGKITFKEYGKQKIYIARQDQFEIPNSEELAQMKEDNAKLQEQLQEKKKTISDVESEIKSLQSNLTLEEIQEKDAKLRKEVKEMEEKLVKLREGITLVRPEDKKAVEDMYADKINQWRKRKRMFRDIWDTVTENSPKDVKELKEELGIEYDEDVGLSFQAYADLIQHGKKRPRGQ.

The stretch at 76–150 (PNSEELAQMK…KLREGITLVR (75 aa)) forms a coiled coil.

It belongs to the HOP2 family. In terms of assembly, interacts with MND1 and MIP1. In terms of tissue distribution, expressed in vegetative and reproductive tissues. Found in seedlings, leaves and flowers.

The protein localises to the nucleus. Its function is as follows. Involved in bivalent formation and segregation of homologous chromosomes in meiosis. The chain is Homologous-pairing protein 2 homolog (HOP2) from Arabidopsis thaliana (Mouse-ear cress).